Here is a 241-residue protein sequence, read N- to C-terminus: MSKTRGSLFVRLRRLALRAILAVLGVWIAGILLFSVMPVPFSAVMVERQFSAWFSGDFRYVAHSDWVSMDEISPWMGLAVIAAEDQTFPEHWGFDVAAIQKAVAHNENSRRIRGASTLSQQTAKNLFLWDGRSWVRKGLEAGLTLGIETVWSKRRILTVYLNIAEFGDGVFGVEEASQRYFNKPASRLSASEAALLAAVLPNPLRYKASAPSGYVRARQQWILRQMRQLGGEGFMAQHKLR.

A helical membrane pass occupies residues 19 to 39 (AILAVLGVWIAGILLFSVMPV).

This sequence belongs to the glycosyltransferase 51 family.

Its subcellular location is the cell inner membrane. It catalyses the reaction [GlcNAc-(1-&gt;4)-Mur2Ac(oyl-L-Ala-gamma-D-Glu-L-Lys-D-Ala-D-Ala)](n)-di-trans,octa-cis-undecaprenyl diphosphate + beta-D-GlcNAc-(1-&gt;4)-Mur2Ac(oyl-L-Ala-gamma-D-Glu-L-Lys-D-Ala-D-Ala)-di-trans,octa-cis-undecaprenyl diphosphate = [GlcNAc-(1-&gt;4)-Mur2Ac(oyl-L-Ala-gamma-D-Glu-L-Lys-D-Ala-D-Ala)](n+1)-di-trans,octa-cis-undecaprenyl diphosphate + di-trans,octa-cis-undecaprenyl diphosphate + H(+). It participates in cell wall biogenesis; peptidoglycan biosynthesis. Its function is as follows. Peptidoglycan polymerase that catalyzes glycan chain elongation from lipid-linked precursors. The protein is Biosynthetic peptidoglycan transglycosylase of Cronobacter sakazakii (strain ATCC BAA-894) (Enterobacter sakazakii).